We begin with the raw amino-acid sequence, 752 residues long: Phosphoribosylformylglycinamidine synthase subunit PurL (752 aa).

Residue His58 is part of the active site. ATP contacts are provided by Tyr61 and Lys103. Residue Glu105 coordinates Mg(2+). Substrate-binding positions include 106–109 (SHNH) and Arg128. His107 acts as the Proton acceptor in catalysis. Asp129 provides a ligand contact to Mg(2+). Gln253 is a binding site for substrate. Asp281 is a Mg(2+) binding site. 325-327 (ESQ) serves as a coordination point for substrate. ATP is bound by residues Asp513 and Gly550. Asn551 lines the Mg(2+) pocket. Position 553 (Ser553) interacts with substrate.

This sequence belongs to the FGAMS family. As to quaternary structure, monomer. Part of the FGAM synthase complex composed of 1 PurL, 1 PurQ and 2 PurS subunits.

Its subcellular location is the cytoplasm. It carries out the reaction N(2)-formyl-N(1)-(5-phospho-beta-D-ribosyl)glycinamide + L-glutamine + ATP + H2O = 2-formamido-N(1)-(5-O-phospho-beta-D-ribosyl)acetamidine + L-glutamate + ADP + phosphate + H(+). It functions in the pathway purine metabolism; IMP biosynthesis via de novo pathway; 5-amino-1-(5-phospho-D-ribosyl)imidazole from N(2)-formyl-N(1)-(5-phospho-D-ribosyl)glycinamide: step 1/2. Part of the phosphoribosylformylglycinamidine synthase complex involved in the purines biosynthetic pathway. Catalyzes the ATP-dependent conversion of formylglycinamide ribonucleotide (FGAR) and glutamine to yield formylglycinamidine ribonucleotide (FGAM) and glutamate. The FGAM synthase complex is composed of three subunits. PurQ produces an ammonia molecule by converting glutamine to glutamate. PurL transfers the ammonia molecule to FGAR to form FGAM in an ATP-dependent manner. PurS interacts with PurQ and PurL and is thought to assist in the transfer of the ammonia molecule from PurQ to PurL. The polypeptide is Phosphoribosylformylglycinamidine synthase subunit PurL (Streptomyces coelicolor (strain ATCC BAA-471 / A3(2) / M145)).